A 139-amino-acid chain; its full sequence is uncharacterized protein (139 aa).

Residues 9–133 form the VOC domain; the sequence is QAAQIRIARP…DGWRIVFMNS (125 aa).

This is an uncharacterized protein from Bacillus subtilis (strain 168).